Reading from the N-terminus, the 557-residue chain is Dihydroxy-acid dehydratase (557 aa).

Asp78 lines the Mg(2+) pocket. Cys119 serves as a coordination point for [2Fe-2S] cluster. Residues Asp120 and Lys121 each coordinate Mg(2+). An N6-carboxylysine modification is found at Lys121. Cys192 serves as a coordination point for [2Fe-2S] cluster. Glu442 serves as a coordination point for Mg(2+). The active-site Proton acceptor is Ser468.

Belongs to the IlvD/Edd family. Homodimer. [2Fe-2S] cluster serves as cofactor. It depends on Mg(2+) as a cofactor.

The enzyme catalyses (2R)-2,3-dihydroxy-3-methylbutanoate = 3-methyl-2-oxobutanoate + H2O. The catalysed reaction is (2R,3R)-2,3-dihydroxy-3-methylpentanoate = (S)-3-methyl-2-oxopentanoate + H2O. It functions in the pathway amino-acid biosynthesis; L-isoleucine biosynthesis; L-isoleucine from 2-oxobutanoate: step 3/4. The protein operates within amino-acid biosynthesis; L-valine biosynthesis; L-valine from pyruvate: step 3/4. In terms of biological role, functions in the biosynthesis of branched-chain amino acids. Catalyzes the dehydration of (2R,3R)-2,3-dihydroxy-3-methylpentanoate (2,3-dihydroxy-3-methylvalerate) into 2-oxo-3-methylpentanoate (2-oxo-3-methylvalerate) and of (2R)-2,3-dihydroxy-3-methylbutanoate (2,3-dihydroxyisovalerate) into 2-oxo-3-methylbutanoate (2-oxoisovalerate), the penultimate precursor to L-isoleucine and L-valine, respectively. This is Dihydroxy-acid dehydratase from Bacillus mycoides (strain KBAB4) (Bacillus weihenstephanensis).